The chain runs to 498 residues: Diacylglycerol O-acyltransferase 1A (498 aa).

The interval 1–67 (MAISDEPETV…ANSQPQQKQD (67 aa)) is disordered. 7 consecutive transmembrane segments (helical) span residues 102–122 (HAGLFNLCIVVLVAVNSRLII), 146–166 (WPLFMCCLSLVVFPFAAFIVE), 178–198 (VVVVLHIIITSASLFYPVLVI), 203–223 (SAFLSGVTLMLFACVVWLKLV), 253–273 (YPYNVSFKSLAYFLVAPTLCY), 295–315 (LIIFTGVMGFIIEQYINPIVQ), and 342–362 (VWLCMFYCFFHLWLNILAELL). The FYXDWWN motif motif lies at 369-375 (FYQDWWN). The next 3 membrane-spanning stretches (helical) occupy residues 410-430 (AVALLIAFLVSALFHELCIAV), 432-452 (CHIFKLWAFGGIMFQVPLVFI), and 465-485 (VGNMIFWFIFSILGQPMCVLL). The active site involves His424.

It belongs to the membrane-bound acyltransferase family. Sterol o-acyltransferase subfamily. As to expression, highly expressed in flowers and pods. Expressed at low levels in roots, stems and leaves.

The protein resides in the endoplasmic reticulum membrane. The enzyme catalyses an acyl-CoA + a 1,2-diacyl-sn-glycerol = a triacyl-sn-glycerol + CoA. It functions in the pathway glycerolipid metabolism; triacylglycerol biosynthesis. In terms of biological role, major contributor to triacylglycerol (TAG) synthesis and oil accumulation in developing seeds. Catalyzes the acylation of the sn-3 hydroxy group of sn-1,2-diacylglycerol using acyl-CoA. Has a marked preference for oleoyl-CoA (18:1) and sn-1,2-dioleoylglycerol over vernoloyl-CoA and sn-1,2-divernoloylglycerol. Can use oleoyl-CoA, linoleoyl-CoA and linolenoyl-CoA as substrates. The protein is Diacylglycerol O-acyltransferase 1A of Glycine max (Soybean).